We begin with the raw amino-acid sequence, 404 residues long: Ammonium transporter (404 aa).

9 helical membrane passes run 7–27 (VFMFFCALLVWLMTPGLALFY), 44–64 (FSSIAIVSIVWVLFGYTLAFA), 96–116 (LFMMFQMTFAVLTTAIISGAF), 125–145 (FLLFSVLWASLVYTPVAHWVW), 158–178 (FAGGNVVHISSGVAGLVLAIV), 227–247 (INTNTAAAAGIAGWILVEWII), 254–274 (LGAVSGAIAGLVAITPAAGFV), 277–297 (FASIIIGIIGGAVCFWGVFSL), and 352–372 (IVAIAATYVFVFIVTFVIIKI).

Belongs to the ammonia transporter channel (TC 1.A.11.2) family. Interacts with NrgB for a correct localization of the latter. GlnK-AmtB complex interacts with TnrA.

The protein resides in the cell membrane. Its function is as follows. Functions as an ammonium and methylammonium transporter in the absence of glutamine. Required for ammonium utilization at low concentrations or at low pH values, when ammonium is the single nitrogen source. Required for binding of NrgB to the membrane. Interaction between GlnK-AmtB complex and TnrA protects TnrA from proteolytic degradation. This is Ammonium transporter from Bacillus subtilis (strain 168).